We begin with the raw amino-acid sequence, 106 residues long: Small ribosomal subunit protein bS16 (106 aa).

It belongs to the bacterial ribosomal protein bS16 family.

This chain is Small ribosomal subunit protein bS16, found in Wolbachia pipientis wMel.